The primary structure comprises 576 residues: Quinone-reactive Ni/Fe-hydrogenase large chain (576 aa).

Ni(2+)-binding residues include cysteine 62, cysteine 65, cysteine 547, and cysteine 550.

Belongs to the [NiFe]/[NiFeSe] hydrogenase large subunit family. In terms of assembly, heterodimer of a large and a small subunit. The cofactor is Ni(2+).

It is found in the cell membrane. It carries out the reaction H2 + a menaquinone = a menaquinol. Its function is as follows. This enzyme recycles the H(2) produced by nitrogenase to increase the production of ATP and to protect nitrogenase against inhibition or damage by O(2) under carbon- or phosphate-limited conditions. This chain is Quinone-reactive Ni/Fe-hydrogenase large chain (hydB), found in Wolinella succinogenes (strain ATCC 29543 / DSM 1740 / CCUG 13145 / JCM 31913 / LMG 7466 / NCTC 11488 / FDC 602W) (Vibrio succinogenes).